The following is a 515-amino-acid chain: Putative acetolactate synthase large subunit IlvX (515 aa).

E48 lines the thiamine diphosphate pocket. Residues 249 to 269 (FAEG…AGAR) and 283 to 302 (DLVP…GAAD) each bind FAD. Residues 357–436 (TCGVLLPQAT…VTTVIYNNGA (80 aa)) are thiamine pyrophosphate binding. Mg(2+) is bound by residues D407 and N434.

This sequence belongs to the TPP enzyme family. Heterodimer of large catalytic subunit and small regulatory subunit. The cofactor is Mg(2+). Thiamine diphosphate serves as cofactor.

It catalyses the reaction 2 pyruvate + H(+) = (2S)-2-acetolactate + CO2. The protein operates within amino-acid biosynthesis; L-isoleucine biosynthesis; L-isoleucine from 2-oxobutanoate: step 1/4. Its pathway is amino-acid biosynthesis; L-valine biosynthesis; L-valine from pyruvate: step 1/4. Functionally, catalyzes the conversion of 2 pyruvate molecules into acetolactate in the first common step of the biosynthetic pathway of the branched-amino acids such as leucine, isoleucine, and valine. The sequence is that of Putative acetolactate synthase large subunit IlvX (ilvX) from Mycobacterium tuberculosis (strain ATCC 25618 / H37Rv).